The sequence spans 351 residues: S-adenosylmethionine:tRNA ribosyltransferase-isomerase (351 aa).

The protein belongs to the QueA family. Monomer.

Its subcellular location is the cytoplasm. The catalysed reaction is 7-aminomethyl-7-carbaguanosine(34) in tRNA + S-adenosyl-L-methionine = epoxyqueuosine(34) in tRNA + adenine + L-methionine + 2 H(+). Its pathway is tRNA modification; tRNA-queuosine biosynthesis. Functionally, transfers and isomerizes the ribose moiety from AdoMet to the 7-aminomethyl group of 7-deazaguanine (preQ1-tRNA) to give epoxyqueuosine (oQ-tRNA). The protein is S-adenosylmethionine:tRNA ribosyltransferase-isomerase of Hydrogenovibrio crunogenus (strain DSM 25203 / XCL-2) (Thiomicrospira crunogena).